A 703-amino-acid polypeptide reads, in one-letter code: Phosphoribosylformylglycinamidine synthase subunit PurL (703 aa).

H36 is an active-site residue. 2 residues coordinate ATP: Y39 and K80. A Mg(2+)-binding site is contributed by E82. Substrate is bound by residues 83-86 (SHNH) and R105. H84 acts as the Proton acceptor in catalysis. D106 provides a ligand contact to Mg(2+). Substrate is bound at residue Q226. A Mg(2+)-binding site is contributed by D252. Position 294 to 296 (294 to 296 (ETQ)) interacts with substrate. Residues D468 and G505 each contribute to the ATP site. Substrate is bound at residue S508.

The protein belongs to the FGAMS family. In terms of assembly, monomer. Part of the FGAM synthase complex composed of 1 PurL, 1 PurQ and 2 PurS subunits.

The protein localises to the cytoplasm. It catalyses the reaction N(2)-formyl-N(1)-(5-phospho-beta-D-ribosyl)glycinamide + L-glutamine + ATP + H2O = 2-formamido-N(1)-(5-O-phospho-beta-D-ribosyl)acetamidine + L-glutamate + ADP + phosphate + H(+). It participates in purine metabolism; IMP biosynthesis via de novo pathway; 5-amino-1-(5-phospho-D-ribosyl)imidazole from N(2)-formyl-N(1)-(5-phospho-D-ribosyl)glycinamide: step 1/2. In terms of biological role, part of the phosphoribosylformylglycinamidine synthase complex involved in the purines biosynthetic pathway. Catalyzes the ATP-dependent conversion of formylglycinamide ribonucleotide (FGAR) and glutamine to yield formylglycinamidine ribonucleotide (FGAM) and glutamate. The FGAM synthase complex is composed of three subunits. PurQ produces an ammonia molecule by converting glutamine to glutamate. PurL transfers the ammonia molecule to FGAR to form FGAM in an ATP-dependent manner. PurS interacts with PurQ and PurL and is thought to assist in the transfer of the ammonia molecule from PurQ to PurL. This Sulfurisphaera tokodaii (strain DSM 16993 / JCM 10545 / NBRC 100140 / 7) (Sulfolobus tokodaii) protein is Phosphoribosylformylglycinamidine synthase subunit PurL.